A 61-amino-acid polypeptide reads, in one-letter code: Small ribosomal subunit protein uS14 (61 aa).

Zn(2+)-binding residues include C24, C27, C40, and C43.

Belongs to the universal ribosomal protein uS14 family. Zinc-binding uS14 subfamily. Part of the 30S ribosomal subunit. Contacts proteins S3 and S10. It depends on Zn(2+) as a cofactor.

Functionally, binds 16S rRNA, required for the assembly of 30S particles and may also be responsible for determining the conformation of the 16S rRNA at the A site. In Syntrophus aciditrophicus (strain SB), this protein is Small ribosomal subunit protein uS14.